Reading from the N-terminus, the 421-residue chain is Tol-Pal system protein TolA (421 aa).

The Cytoplasmic portion of the chain corresponds to 1–13 (MSKATEQNDKLKR). The helical transmembrane segment at 14–34 (AIIISAVLHVILFAALIWSSF) threads the bilayer. Residues 35 to 421 (DENIEASAGG…FKNAPLDFKP (387 aa)) are Periplasmic-facing. The domain II (alpha-helical) stretch occupies residues 48-310 (SSIDAVMVDS…LSSGKNAPKT (263 aa)). The segment at 65–266 (KRMQSQESSA…KAAADKKAAA (202 aa)) is disordered. Composition is skewed to basic and acidic residues over residues 73-175 (SAKR…EAEA) and 206-266 (EARK…KAAA). 13 tandem repeats follow at residues 224 to 229 (EKKAAA), 230 to 234 (EKAAA), 235 to 240 (DKKAAA), 241 to 245 (EKAAA), 246 to 250 (DKKAA), 251 to 255 (EKAAA), 256 to 260 (EKAAA), 261 to 266 (DKKAAA), 267 to 271 (EKAAA), 272 to 277 (DKKAAA), 278 to 282 (AKAAA), 283 to 287 (EKAAA), and 288 to 292 (AKAAA). A 13 X tandem repeats of [EDA]-K(1,2)-A(2,4) region spans residues 224–292 (EKKAAAEKAA…EKAAAAKAAA (69 aa)). The disordered stretch occupies residues 300–336 (ELSSGKNAPKTGGGAKGNNASPAGSGNTKNNGASGAD). The segment at 311–421 (GGGAKGNNAS…FKNAPLDFKP (111 aa)) is domain III (functional). Over residues 317–332 (NNASPAGSGNTKNNGA) the composition is skewed to polar residues. Cysteines 363 and 388 form a disulfide.

Belongs to the TolA family. In terms of assembly, the Tol-Pal system is composed of five core proteins: the inner membrane proteins TolA, TolQ and TolR, the periplasmic protein TolB and the outer membrane protein Pal. They form a network linking the inner and outer membranes and the peptidoglycan layer. TolA interacts with TolQ and TolR via its N-terminal domain. Interacts with CpoB, and with the trimeric porins OmpC, OmpF, PhoE and LamB via its central domain. Interacts with TolB via its C-terminal domain. Also interacts with Pal via its C-terminal domain. This interaction is proton motive force dependent and requires TolQ and TolR.

The protein localises to the cell inner membrane. Functionally, part of the Tol-Pal system, which plays a role in outer membrane invagination during cell division and is important for maintaining outer membrane integrity. The Tol-Pal system is also required for polar localization of chemoreceptors clusters. The system also appears to be required for the activity of several outer membrane-localized enzymes with cell wall remodeling activity. Is involved in the uptake of group A colicins (colicins A, E1, E2, E3, and K) and in the uptake of filamentous phage DNA. In Escherichia coli (strain K12), this protein is Tol-Pal system protein TolA.